The primary structure comprises 79 residues: Small proline-rich protein 4 (79 aa).

The span at 1–26 (MSSQQQQRQQQQCPPQRAQQQQVKQP) shows a compositional bias: low complexity. The disordered stretch occupies residues 1 to 79 (MSSQQQQRQQ…AQQASKSKQK (79 aa)). The segment covering 66–79 (KCPSAQQASKSKQK) has biased composition (polar residues).

It belongs to the cornifin (SPRR) family. Post-translationally, cross-linked to membrane proteins by transglutaminase.

Its subcellular location is the cytoplasm. The protein localises to the cell cortex. Its function is as follows. Cross-linked envelope protein of keratinocytes. Involved in UV-induced cornification. This chain is Small proline-rich protein 4 (SPRR4), found in Homo sapiens (Human).